The primary structure comprises 238 residues: Complement C1q-like protein 4 (238 aa).

A signal peptide spans 1–15 (MVLLLLVAIPLLVHS). Positions 36-101 (GPRGPGPDGA…PPGPGPGGVA (66 aa)) are disordered. The region spanning 53 to 96 (PPGAKGEVGRRGKAGLRGPPGPPGPRGPPGEPGRPGPPGPPGPG) is the Collagen-like domain. Over residues 71–96 (PPGPPGPRGPPGEPGRPGPPGPPGPG) the composition is skewed to pro residues. The C1q domain occupies 105–238 (GYVPRIAFYA…TFSGFIIYPD (134 aa)).

As to quaternary structure, forms homooligomers, predominantly dimers or trimers. Forms heterooligomers with C1QL1, C1QL2 and C1QL3, when proteins are coexpressed; this interaction does not occur after secretion. Interacts with ADGRB3. Highest expression levels in testis and adipose tissue, lower levels in skeletal muscle and kidney.

The protein localises to the secreted. Functionally, may regulate the number of excitatory synapses that are formed on hippocampus neurons. Has no effect on inhibitory synapses. May inhibit adipocyte differentiation at an early stage of the process. In Homo sapiens (Human), this protein is Complement C1q-like protein 4 (C1QL4).